A 786-amino-acid chain; its full sequence is LPS-assembly protein LptD (786 aa).

The first 24 residues, 1–24, serve as a signal peptide directing secretion; sequence MKKRIPTLLATMIASALYSHQGLA. Disulfide bonds link cysteine 31/cysteine 726 and cysteine 173/cysteine 727.

Belongs to the LptD family. Component of the lipopolysaccharide transport and assembly complex. Interacts with LptE and LptA. In terms of processing, contains two intramolecular disulfide bonds.

The protein localises to the cell outer membrane. Functionally, together with LptE, is involved in the assembly of lipopolysaccharide (LPS) at the surface of the outer membrane. The sequence is that of LPS-assembly protein LptD from Salmonella typhimurium (strain LT2 / SGSC1412 / ATCC 700720).